A 225-amino-acid polypeptide reads, in one-letter code: MMYHIPGVLSPQDVARFREHLEQAEWVDGRVTTGAQGAQVKNNQQVDTRSALYAALQNEVLNAVNQHALFFAAALPRTLSTPLFNRYQNNETYGFHVDGAVRSHPQNGWMRTDLSATLFLSDPESYDGGELVVNDTFGQHRVKLPAGDLVLYPSSSLHCVTPVTRGVRVASFMWIQSMIRDDKKRAMLFELDNNIQSLKSRYGESEEILSLLNLYHNLLREWSEI.

The Fe2OG dioxygenase domain maps to 78-177; sequence TLSTPLFNRY…RVASFMWIQS (100 aa). 3 residues coordinate Fe cation: His96, Asp98, and His158. Arg168 is a binding site for 2-oxoglutarate.

Fe(2+) serves as cofactor. It depends on L-ascorbate as a cofactor.

This chain is PKHD-type hydroxylase YbiX, found in Escherichia coli O81 (strain ED1a).